The following is a 451-amino-acid chain: Serine--tRNA ligase, cytoplasmic (451 aa).

A disulfide bridge links C213 with C244. 238–240 (TAE) provides a ligand contact to L-serine. Residues 269 to 271 (RKE) and V285 contribute to the ATP site. E292 contributes to the L-serine binding site. Position 358–361 (358–361 (ELVS)) interacts with ATP. T396 is an L-serine binding site.

The protein belongs to the class-II aminoacyl-tRNA synthetase family. Type-1 seryl-tRNA synthetase subfamily. Homodimer. The tRNA molecule binds across the dimer.

It localises to the cytoplasm. Its subcellular location is the cytosol. The catalysed reaction is tRNA(Ser) + L-serine + ATP = L-seryl-tRNA(Ser) + AMP + diphosphate + H(+). Catalyzes the attachment of serine to tRNA(Ser) in a two-step reaction: serine is first activated by ATP to form Ser-AMP and then transferred to the acceptor end of tRNA(Ser). The protein is Serine--tRNA ligase, cytoplasmic of Arabidopsis thaliana (Mouse-ear cress).